Here is a 264-residue protein sequence, read N- to C-terminus: Mediator of RNA polymerase II transcription subunit 4 (264 aa).

The segment at 183 to 264 (LTKLPGQEDG…DLDLFNPDEF (82 aa)) is disordered. Residues 200–225 (NEDKNIVKDAEGAEGEIRQDDKKEDD) show a composition bias toward basic and acidic residues. Over residues 236–264 (AEGDEDKNAGEDEDEAMDSDLDLFNPDEF) the composition is skewed to acidic residues.

Belongs to the Mediator complex subunit 4 family. As to quaternary structure, component of the Mediator complex.

It is found in the nucleus. Component of the Mediator complex, a coactivator involved in the regulated transcription of nearly all RNA polymerase II-dependent genes. Mediator functions as a bridge to convey information from gene-specific regulatory proteins to the basal RNA polymerase II transcription machinery. Mediator is recruited to promoters by direct interactions with regulatory proteins and serves as a scaffold for the assembly of a functional preinitiation complex with RNA polymerase II and the general transcription factors. This Candida glabrata (strain ATCC 2001 / BCRC 20586 / JCM 3761 / NBRC 0622 / NRRL Y-65 / CBS 138) (Yeast) protein is Mediator of RNA polymerase II transcription subunit 4 (MED4).